A 176-amino-acid chain; its full sequence is Large ribosomal subunit protein uL6 (176 aa).

The protein belongs to the universal ribosomal protein uL6 family. As to quaternary structure, part of the 50S ribosomal subunit.

Functionally, this protein binds to the 23S rRNA, and is important in its secondary structure. It is located near the subunit interface in the base of the L7/L12 stalk, and near the tRNA binding site of the peptidyltransferase center. The chain is Large ribosomal subunit protein uL6 from Paraburkholderia phymatum (strain DSM 17167 / CIP 108236 / LMG 21445 / STM815) (Burkholderia phymatum).